The following is a 577-amino-acid chain: Nuclear receptor subfamily 4 group A member 1 (577 aa).

The nuclear receptor DNA-binding region spans 243–318; sequence EGRCAVCGDN…VGMVKEVVRT (76 aa). 2 consecutive NR C4-type zinc fingers follow at residues 246–266 and 282–311; these read CAVC…CEGC and CLAN…VVGM. Positions 247–333 are required for binding NBRE-containing DNA; it reads AVCGDNASCQ…RRGRLPSKPK (87 aa). Residues 339 to 574 enclose the NR LBD domain; the sequence is SPVDLINSLV…PIVDKIFMDT (236 aa). The tract at residues 500-523 is may bind lipopolysaccharide; it reads PKKVEELQSQIINCLKEHIPSSMN. Residues 563–574 form an AF-2 region; the sequence is PPPIVDKIFMDT.

It belongs to the nuclear hormone receptor family. NR4 subfamily. The cofactor is Zn(2+).

It localises to the nucleus. The protein localises to the cytoplasm. The protein resides in the cytosol. In terms of biological role, orphan nuclear receptor. Binds the NGFI-B response element (NBRE) 5'-AAAAGGTCA-3'. In the cytosol, may detect bacterial lipopolysaccharide (LPS) and NBRE-containing mitochondrial DNA released during pyroptosis, and play a role in non-canonical inflammasome activation. The sequence is that of Nuclear receptor subfamily 4 group A member 1 (nr4a1) from Xenopus laevis (African clawed frog).